The primary structure comprises 175 residues: Crossover junction endodeoxyribonuclease RuvC (175 aa).

Active-site residues include D11, E71, and H143. D11, E71, and H143 together coordinate Mg(2+).

This sequence belongs to the RuvC family. Homodimer which binds Holliday junction (HJ) DNA. The HJ becomes 2-fold symmetrical on binding to RuvC with unstacked arms; it has a different conformation from HJ DNA in complex with RuvA. In the full resolvosome a probable DNA-RuvA(4)-RuvB(12)-RuvC(2) complex forms which resolves the HJ. It depends on Mg(2+) as a cofactor.

It is found in the cytoplasm. It carries out the reaction Endonucleolytic cleavage at a junction such as a reciprocal single-stranded crossover between two homologous DNA duplexes (Holliday junction).. Its function is as follows. The RuvA-RuvB-RuvC complex processes Holliday junction (HJ) DNA during genetic recombination and DNA repair. Endonuclease that resolves HJ intermediates. Cleaves cruciform DNA by making single-stranded nicks across the HJ at symmetrical positions within the homologous arms, yielding a 5'-phosphate and a 3'-hydroxyl group; requires a central core of homology in the junction. The consensus cleavage sequence is 5'-(A/T)TT(C/G)-3'. Cleavage occurs on the 3'-side of the TT dinucleotide at the point of strand exchange. HJ branch migration catalyzed by RuvA-RuvB allows RuvC to scan DNA until it finds its consensus sequence, where it cleaves and resolves the cruciform DNA. In Parvibaculum lavamentivorans (strain DS-1 / DSM 13023 / NCIMB 13966), this protein is Crossover junction endodeoxyribonuclease RuvC.